A 511-amino-acid chain; its full sequence is Gap junction alpha-3 protein (511 aa).

Residues 2-15 (GDWSFLGRLLENAQ) lie within the membrane without spanning it. The Cytoplasmic portion of the chain corresponds to 16–19 (EHST). A helical transmembrane segment spans residues 20–40 (VIGKVWLTVLFIFRILVLGAA). At 41 to 71 (AEEVWGDEQSDFTCNTQQPGCENVCYDKAFP) the chain is on the extracellular side. 3 disulfides stabilise this stretch: Cys54–Cys214, Cys61–Cys208, and Cys65–Cys203. A helical transmembrane segment spans residues 72-92 (ISHIRFWVLQIIFVSTPTLIY). Over 93–174 (LGHVLHIVRM…GALLRTYIFN (82 aa)) the chain is Cytoplasmic. Positions 110–119 (EEELKKRGSV) are enriched in basic and acidic residues. The interval 110–143 (EEELKKRGSVKDNNYPGAATSGGGSGGGNNFKDP) is disordered. A compositionally biased stretch (gly residues) spans 129–138 (TSGGGSGGGN). A helical transmembrane segment spans residues 175-195 (IIFKTLFEVGFIVGQYFLYGF). The Extracellular segment spans residues 196–223 (ELKPVYQCSRPPCPHTVDCFISRPTEKT). Residues 224–244 (IFIIFMLVVASVSLLLNMLEI) form a helical membrane-spanning segment. Over 245–511 (YHLGWKKLKQ…SRARSDDLAV (267 aa)) the chain is Cytoplasmic. A disordered region spans residues 397–511 (AEQQGKAPSS…SRARSDDLAV (115 aa)). Low complexity-rich tracts occupy residues 403 to 415 (APSSSAGSSTPSS) and 440 to 456 (TTTNSGSSTSLSGASGS).

Belongs to the connexin family. A hemichannel or connexon is composed of a hexamer of connexins. A functional gap junction is formed by the apposition of two hemichannels. During early stages of lens development, interacts with the C-terminus of MIP. In terms of tissue distribution, detected in eye lens.

It localises to the cell membrane. Its subcellular location is the cell junction. The protein resides in the gap junction. In terms of biological role, structural component of lens fiber gap junctions. Gap junctions are dodecameric channels that connect the cytoplasm of adjoining cells. They are formed by the docking of two hexameric hemichannels, one from each cell membrane. Small molecules and ions diffuse from one cell to a neighboring cell via the central pore. This Gallus gallus (Chicken) protein is Gap junction alpha-3 protein (GJA3).